The primary structure comprises 77 residues: Conodipine-M alpha chain (77 aa).

At Q1 the chain carries Pyrrolidone carboxylic acid. The active site involves H36.

In terms of assembly, heterodimer of an alpha and a beta chains; probably disulfide-linked. The cofactor is Ca(2+). In terms of tissue distribution, expressed by the venom duct.

The protein resides in the secreted. It catalyses the reaction a 1,2-diacyl-sn-glycero-3-phosphocholine + H2O = a 1-acyl-sn-glycero-3-phosphocholine + a fatty acid + H(+). Inhibited by linoleoyl amide and MG14. Its function is as follows. Heterodimer: conodipine-M catalyzes the calcium-dependent hydrolysis of the 2-acyl groups in 3-sn-phosphoglycerides. This activity may be supported by the alpha chain. Conodipine-M inhibits the binding of isradipine (a ligand specific for L-type calcium channel) to L-type calcium channels. The protein is Conodipine-M alpha chain of Conus magus (Magical cone).